The sequence spans 156 residues: Cyanate hydratase (156 aa).

Catalysis depends on residues R96, E99, and S122.

The protein belongs to the cyanase family.

The catalysed reaction is cyanate + hydrogencarbonate + 3 H(+) = NH4(+) + 2 CO2. Functionally, catalyzes the reaction of cyanate with bicarbonate to produce ammonia and carbon dioxide. This chain is Cyanate hydratase, found in Burkholderia pseudomallei (strain 1106a).